The chain runs to 71 residues: Large ribosomal subunit protein bL31 (71 aa).

Residues Cys-16, Cys-18, Cys-38, and Cys-41 each contribute to the Zn(2+) site.

This sequence belongs to the bacterial ribosomal protein bL31 family. Type A subfamily. Part of the 50S ribosomal subunit. Zn(2+) serves as cofactor.

Binds the 23S rRNA. This chain is Large ribosomal subunit protein bL31, found in Francisella tularensis subsp. mediasiatica (strain FSC147).